A 153-amino-acid chain; its full sequence is Ribosomal RNA large subunit methyltransferase H (153 aa).

S-adenosyl-L-methionine contacts are provided by residues Leu70, Gly102, and 121-126 (LSRMTF).

It belongs to the RNA methyltransferase RlmH family. Homodimer.

The protein localises to the cytoplasm. It carries out the reaction pseudouridine(1915) in 23S rRNA + S-adenosyl-L-methionine = N(3)-methylpseudouridine(1915) in 23S rRNA + S-adenosyl-L-homocysteine + H(+). In terms of biological role, specifically methylates the pseudouridine at position 1915 (m3Psi1915) in 23S rRNA. This chain is Ribosomal RNA large subunit methyltransferase H, found in Geotalea daltonii (strain DSM 22248 / JCM 15807 / FRC-32) (Geobacter daltonii).